We begin with the raw amino-acid sequence, 376 residues long: Rhodopsin (376 aa).

Over 1 to 51 the chain is Extracellular; sequence MSLINEPSYSAYSWGGQGGYGNQTVVDKVLPEMLHLIDPHWYQFPPMNPLW. Residue Asn22 is glycosylated (N-linked (GlcNAc...) asparagine). A helical transmembrane segment spans residues 52–76; that stretch reads HGLLGFVIGCLGFVSVVGNGMVIYI. Over 77–88 the chain is Cytoplasmic; it reads FSTTKGLRTPSN. A helical transmembrane segment spans residues 89–113; the sequence is LLVVNLAFSDFLMMLSMSPPMVINC. Residues 114–128 are Extracellular-facing; it reads YYETWVLGPFMCELY. The cysteines at positions 125 and 202 are disulfide-linked. The chain crosses the membrane as a helical span at residues 129–148; it reads ALLGSLFGCGSIWTMVMIAL. Over 149–167 the chain is Cytoplasmic; it reads DRYNVIVKGLAAKPMTNKT. The helical transmembrane segment at 168 to 191 threads the bilayer; sequence AMLRILGIWAMSIAWTVFPLFGWN. The Extracellular portion of the chain corresponds to 192-215; that stretch reads RYVPEGNMTACGTDYLNKEWVSRS. Asn198 carries an N-linked (GlcNAc...) asparagine glycan. Residues 216–243 form a helical membrane-spanning segment; it reads YILVYSVFVYFLPLATIIYSYWFIVQAV. Topologically, residues 244-278 are cytoplasmic; it reads SAHEKQMREQAKKMNVASLRSAENANTSAECKLAK. The chain crosses the membrane as a helical span at residues 279–302; it reads VALMTISLWFFAWTPYLVTDFSGI. Over 303–309 the chain is Extracellular; the sequence is FEWGKIS. The helical transmembrane segment at 310–334 threads the bilayer; the sequence is PLATIWCSLFAKANAVYNPIVYGIS. Lys321 is subject to N6-(retinylidene)lysine. The Cytoplasmic portion of the chain corresponds to 335–376; it reads HPKYRAALNKKFPSLACASEPDDTASQASGATTVSDEKSASA. The segment at 353 to 376 is disordered; sequence SEPDDTASQASGATTVSDEKSASA. Residues 358 to 368 are compositionally biased toward polar residues; the sequence is TASQASGATTV.

This sequence belongs to the G-protein coupled receptor 1 family. Opsin subfamily. In terms of processing, phosphorylated on some or all of the serine and threonine residues present in the C-terminal region.

It is found in the membrane. In terms of biological role, visual pigments are the light-absorbing molecules that mediate vision. They consist of an apoprotein, opsin, covalently linked to cis-retinal. The chain is Rhodopsin from Sphodromantis sp. (Mantis).